We begin with the raw amino-acid sequence, 511 residues long: Inactive cytochrome P450 monooxygenase cloA (511 aa).

The helical transmembrane segment at 17–37 (ILLTAGLCVPCALVIHGIYNL) threads the bilayer. 2 N-linked (GlcNAc...) asparagine glycosylation sites follow: Asn81 and Asn344. Cys450 serves as a coordination point for heme.

This sequence belongs to the cytochrome P450 family. It depends on heme as a cofactor.

It is found in the membrane. Its function is as follows. Inactive cytochrome P450 monooxygenase; part of the gene cluster that mediates the biosynthesis of fungal ergot alkaloid. DmaW catalyzes the first step of ergot alkaloid biosynthesis by condensing dimethylallyl diphosphate (DMAP) and tryptophan to form 4-dimethylallyl-L-tryptophan. The second step is catalyzed by the methyltransferase easF that methylates 4-dimethylallyl-L-tryptophan in the presence of S-adenosyl-L-methionine, resulting in the formation of 4-dimethylallyl-L-abrine. The catalase easC and the FAD-dependent oxidoreductase easE then transform 4-dimethylallyl-L-abrine to chanoclavine-I which is further oxidized by easD in the presence of NAD(+), resulting in the formation of chanoclavine-I aldehyde. Agroclavine dehydrogenase easG then mediates the conversion of chanoclavine-I aldehyde to agroclavine via a non-enzymatic adduct reaction: the substrate is an iminium intermediate that is formed spontaneously from chanoclavine-I aldehyde in the presence of glutathione. Further conversion of agroclavine to paspalic acid is a two-step process involving oxidation of agroclavine to elymoclavine and of elymoclavine to paspalic acid, the second step being performed by the elymoclavine oxidase cloA. However, cloA does not encode a functional enzyme indicating that C.fusiformis terminates its ergot alkaloid pathway at elymoclavine. This Claviceps fusiformis (Ergot fungus) protein is Inactive cytochrome P450 monooxygenase cloA.